A 251-amino-acid polypeptide reads, in one-letter code: uncharacterized protein (251 aa).

It belongs to the chlamydial CPn_0206/CT_203/TC_0475 family.

This is an uncharacterized protein from Chlamydia trachomatis serovar D (strain ATCC VR-885 / DSM 19411 / UW-3/Cx).